The chain runs to 546 residues: Type II methyltransferase M.XhoI (546 aa).

Belongs to the N(4)/N(6)-methyltransferase family.

It catalyses the reaction a 2'-deoxyadenosine in DNA + S-adenosyl-L-methionine = an N(6)-methyl-2'-deoxyadenosine in DNA + S-adenosyl-L-homocysteine + H(+). In terms of biological role, a gamma subtype methylase, recognizes the double-stranded sequence 5'-CTCGAG-3', methylates A-5 on both strands, and protects the DNA from cleavage by the XhoI endonuclease. This chain is Type II methyltransferase M.XhoI, found in Xanthomonas vasicola.